A 385-amino-acid polypeptide reads, in one-letter code: MAIVVVGAGTAGVNAAFWLRQYGYKGEIRIFSRESVAPYQRPPLSKAFLTSEIAESAVPLKPEGFYTNNNITISLNTPIVSIDVGRKIVSSKDGKEYAYEKLILATPASARRLTCEGSELSGVCYLRSMEDAKNLRRKLVESASVVVLGGGVIGLEVASAAVGLGKRVTVIEATPRVMARVVTPAAANLVRARLEAEGIEFKLNAKLTSIKGRNGHVEQCVLESGEEIQADLIVVGIGAIPELELATEAALEVSNGVVVDDQMCTSDTSIYAIGDCAMARNPFWGTMVRLETIHNAVTHAQIVASSICGTSTPAPTPPRFWSDLKGMALQGLGALKDYDKLVVAINNETLELEVLAYKQERLIATETINLPKRQGALAGSIKLPD.

FAD-binding positions include 8–11 (AGTA), 32–33 (SR), isoleucine 79, glutamate 156, aspartate 275, and isoleucine 293.

Belongs to the FAD-dependent oxidoreductase family. Homodimer. Requires FAD as cofactor.

It localises to the cytoplasm. The enzyme catalyses 2 reduced [rubredoxin] + NAD(+) + H(+) = 2 oxidized [rubredoxin] + NADH. The protein operates within hydrocarbon metabolism; alkane degradation. Functionally, involved in the hydrocarbon hydroxylating system, which transfers electrons from NADH to rubredoxin reductase and then through rubredoxin to alkane 1 monooxygenase. The polypeptide is Rubredoxin-NAD(+) reductase (alkT) (Ectopseudomonas oleovorans (Pseudomonas oleovorans)).